A 159-amino-acid polypeptide reads, in one-letter code: Cyclic pyranopterin monophosphate synthase (159 aa).

Substrate-binding positions include 75-77 and 113-114; these read MCH and ME. Residue D128 is part of the active site.

Belongs to the MoaC family. Homohexamer; trimer of dimers.

The catalysed reaction is (8S)-3',8-cyclo-7,8-dihydroguanosine 5'-triphosphate = cyclic pyranopterin phosphate + diphosphate. It functions in the pathway cofactor biosynthesis; molybdopterin biosynthesis. In terms of biological role, catalyzes the conversion of (8S)-3',8-cyclo-7,8-dihydroguanosine 5'-triphosphate to cyclic pyranopterin monophosphate (cPMP). This chain is Cyclic pyranopterin monophosphate synthase, found in Desulfatibacillum aliphaticivorans.